The sequence spans 263 residues: Zinc transporter ZupT (263 aa).

Helical transmembrane passes span 1 to 21 (MLFA…GGLI), 37 to 57 (LGFS…PGAF), 68 to 88 (GGSW…AIID), 116 to 136 (MMKM…PEGF), and 138 to 158 (TFLA…AIAI). Asn-131 and Glu-134 together coordinate Fe(2+). Glu-134 contacts Zn(2+). His-159 is a Zn(2+) binding site. 3 residues coordinate Fe(2+): Asn-160, Glu-163, and Glu-192. Position 163 (Glu-163) interacts with Zn(2+). 3 helical membrane passes run 184–204 (WATL…LLLM), 206–226 (FIGP…MVFI), and 243–263 (TAIY…LLFI).

Belongs to the ZIP transporter (TC 2.A.5) family. ZupT subfamily.

Its subcellular location is the cell membrane. The enzyme catalyses Zn(2+)(in) = Zn(2+)(out). In terms of biological role, mediates zinc uptake. May also transport other divalent cations. The sequence is that of Zinc transporter ZupT from Corynebacterium glutamicum (strain ATCC 13032 / DSM 20300 / JCM 1318 / BCRC 11384 / CCUG 27702 / LMG 3730 / NBRC 12168 / NCIMB 10025 / NRRL B-2784 / 534).